A 202-amino-acid polypeptide reads, in one-letter code: PITH domain-containing protein 1 (202 aa).

Positions 11 to 184 (SHGVDDGIEY…IVNTVYESKP (174 aa)) constitute a PITH domain.

This sequence belongs to the PITHD1 family.

The protein is PITH domain-containing protein 1 of Dictyostelium discoideum (Social amoeba).